The sequence spans 369 residues: MANVHHISVPSKVLFQKARKLVPPMLEKFHKGQQGRVAVIGGSLDYTGAPYFSAMASARLGCDLSHVICESSAATVIKSYSPNLMVHPILPSSASVKDPSSIDAPSLASPIIAMLGRLHALVIGPGLGRDGVTLKVVTEVMKEARSRSIPFVLDADGLLLVTENPDLVKGYKDCILTPNVNEFSRLAKALNIEVPSLAQISSKESGDKTSKEAEACEKLSQALGGVTIIQKGPHDVISNGVTSIVSDLPGGLKRSGGQGDTLTGSLGTLLAWRAAYHDALWDSGEQEHSKEAENKEEVQGELESNKRMSPSTTLLLAAWAGAAITRECSRRAFKAKGRSMQASDLTDEVHESFLTLIGEPEGSKVPERL.

The region spanning 14–356 (LFQKARKLVP…DEVHESFLTL (343 aa)) is the YjeF C-terminal domain. (6S)-NADPHX contacts are provided by residues G126 and 179 to 185 (NVNEFSR). ATP is bound by residues 231–235 (KGPHD) and 250–259 (GGLKRSGGQG). D260 contributes to the (6S)-NADPHX binding site. Residues 284–306 (GEQEHSKEAENKEEVQGELESNK) show a composition bias toward basic and acidic residues. The segment at 284–307 (GEQEHSKEAENKEEVQGELESNKR) is disordered.

It belongs to the NnrD/CARKD family. Requires Mg(2+) as cofactor.

The protein localises to the cytoplasm. It catalyses the reaction (6S)-NADHX + ATP = ADP + phosphate + NADH + H(+). It carries out the reaction (6S)-NADPHX + ATP = ADP + phosphate + NADPH + H(+). Its function is as follows. Catalyzes the dehydration of the S-form of NAD(P)HX at the expense of ATP, which is converted to ADP. Together with NAD(P)HX epimerase, which catalyzes the epimerization of the S- and R-forms, the enzyme allows the repair of both epimers of NAD(P)HX, a damaged form of NAD(P)H that is a result of enzymatic or heat-dependent hydration. This Emericella nidulans (strain FGSC A4 / ATCC 38163 / CBS 112.46 / NRRL 194 / M139) (Aspergillus nidulans) protein is ATP-dependent (S)-NAD(P)H-hydrate dehydratase.